Consider the following 176-residue polypeptide: UPF0098 protein Rv2140c (176 aa).

T2 is subject to N-acetylthreonine.

It belongs to the UPF0098 family.

The sequence is that of UPF0098 protein Rv2140c from Mycobacterium tuberculosis (strain ATCC 25618 / H37Rv).